The sequence spans 354 residues: Guanine nucleotide-binding protein subunit alpha-14 (354 aa).

Positions 33–354 constitute a G-alpha domain; sequence RELKLLLLGT…QLNLREFNLV (322 aa). Residues 36–49 form a G1 motif region; sequence KLLLLGTGESGKST. Residues 41–48, 175–181, 200–204, 269–272, and Ala-326 contribute to the GTP site; these read GTGESGKS, LRVRVPT, DVGGQ, and NKKD. Positions 48 and 181 each coordinate Mg(2+). A G2 motif region spans residues 173–181; sequence DVLRVRVPT. Residues 196 to 205 are G3 motif; it reads FRMVDVGGQR. Residues 265–272 form a G4 motif region; it reads ILFLNKKD. The tract at residues 324–329 is G5 motif; it reads TCATDT.

Belongs to the G-alpha family. G(q) subfamily. In terms of assembly, g proteins are composed of 3 units; alpha, beta and gamma. The alpha chain contains the guanine nucleotide binding site.

Guanine nucleotide-binding proteins (G proteins) are involved as modulators or transducers in various transmembrane signaling systems. Acts as an activator of phospholipase C. Mediates responses to trypsin. In Xenopus laevis (African clawed frog), this protein is Guanine nucleotide-binding protein subunit alpha-14 (gna14).